Here is a 179-residue protein sequence, read N- to C-terminus: Disulfide bond formation protein B (179 aa).

Residues 1–14 (MLSYFKELSLRRPA) are Cytoplasmic-facing. A helical membrane pass occupies residues 15–31 (WLLLATLACTLEVTGLY). Residues 32 to 49 (FQHKLGLIPCVMCIYERV) are Periplasmic-facing. Residues Cys41 and Cys44 are joined by a disulfide bond. A helical transmembrane segment spans residues 50 to 65 (ALTGLLIAGLIALIAP). The Cytoplasmic portion of the chain corresponds to 66–72 (NFFLFRW). The chain crosses the membrane as a helical span at residues 73–90 (LALVLWGFSAFKGLSLSI). Topologically, residues 91-146 (KHYDYQANPSPWNQCEFKPQFPQTIPLDEWFPNIFAAGTVNCSEKQWQMLGWGMPE) are periplasmic. Cys105 and Cys132 form a disulfide bridge. A helical transmembrane segment spans residues 147–165 (WLIVAFSLFMLFFLIVFMS). Over 166-179 (QFKRAKPQYRSVFR) the chain is Cytoplasmic.

It belongs to the DsbB family.

It localises to the cell inner membrane. Its function is as follows. Required for disulfide bond formation in some periplasmic proteins. Acts by oxidizing the DsbA protein. The protein is Disulfide bond formation protein B of Haemophilus ducreyi (strain 35000HP / ATCC 700724).